A 461-amino-acid chain; its full sequence is CBL-interacting protein kinase 5 (461 aa).

Residues 12 to 266 form the Protein kinase domain; that stretch reads YELGRMLGQG…VEKLVEHPWF (255 aa). ATP-binding positions include 18 to 26 and lysine 41; that span reads LGQGTFAKV. The Proton acceptor role is filled by aspartate 134. The segment at 152 to 181 is activation loop; the sequence is DFGLSAFKECQKQDGLLHTTCGTPAYVAPE. Residues 300–334 form the NAF domain; the sequence is EGKAKEPASSLKPVSLNAFDIISLSKGFDLSGLFE. The interval 340-369 is PPI; sequence KADSRFMTQKPASAIVSKLEQIAETESFKV. Positions 440–461 are disordered; the sequence is HPSLAQSSTLTQSSKSISRHAI. Positions 442–455 are enriched in low complexity; it reads SLAQSSTLTQSSKS.

It belongs to the protein kinase superfamily. CAMK Ser/Thr protein kinase family. SNF1 subfamily. Requires Mn(2+) as cofactor.

The catalysed reaction is L-seryl-[protein] + ATP = O-phospho-L-seryl-[protein] + ADP + H(+). The enzyme catalyses L-threonyl-[protein] + ATP = O-phospho-L-threonyl-[protein] + ADP + H(+). Functionally, CIPK serine-threonine protein kinases interact with CBL proteins. Binding of a CBL protein to the regulatory NAF domain of CIPK protein lead to the activation of the kinase in a calcium-dependent manner. This is CBL-interacting protein kinase 5 (CIPK5) from Oryza sativa subsp. japonica (Rice).